A 650-amino-acid chain; its full sequence is Exonuclease 3'-5' domain-containing protein 2 (650 aa).

The Mitochondrial intermembrane segment spans residues 1 to 6; the sequence is MSRQNL. The helical transmembrane segment at 7–29 threads the bilayer; the sequence is VALTVTTLLGVAMGGFVLWKGIQ. At 30 to 650 the chain is on the cytoplasmic side; that stretch reads RRWSKTSRVM…YGDDLPIKLS (621 aa). The tract at residues 34 to 89 is disordered; the sequence is KTSRVMQQQPQQPQQPQQPQPQPQPQPQPQPEHPQPQQQVPGGREWPPPEDDQLPF. Positions 49–67 are enriched in pro residues; that stretch reads PQQPQPQPQPQPQPQPEHP. Positions 137, 139, and 275 each coordinate a divalent metal cation. In terms of domain architecture, 3'-5' exonuclease spans 184–276; sequence ILADGAILKV…DQVTYAARDA (93 aa). A disordered region spans residues 340-373; sequence SQLKPRNRKAKTDRMVPGNNQGRDPRKHKRKPLG.

It belongs to the EXD2 family. In terms of assembly, homodimer. Interacts with RBBP8, MRE11 and BRCA1. Requires Mg(2+) as cofactor. The cofactor is Mn(2+).

The protein localises to the mitochondrion outer membrane. It is found in the mitochondrion matrix. The protein resides in the nucleus. Its subcellular location is the chromosome. It catalyses the reaction Exonucleolytic cleavage in the 3'- to 5'-direction to yield nucleoside 5'-phosphates.. Its function is as follows. Exonuclease that has both 3'-5' exoribonuclease and exodeoxyribonuclease activities, depending on the divalent metal cation used as cofactor. In presence of Mg(2+), only shows 3'-5' exoribonuclease activity, while it shows both exoribonuclease and exodeoxyribonuclease activities in presence of Mn(2+). Acts as an exoribonuclease in mitochondrion, possibly by regulating ATP production and mitochondrial translation. Also involved in the response to DNA damage. Acts as 3'-5' exodeoxyribonuclease for double-strand breaks resection and efficient homologous recombination. Plays a key role in controlling the initial steps of chromosomal break repair, it is recruited to chromatin in a damage-dependent manner and functionally interacts with the MRN complex to accelerate resection through its 3'-5' exonuclease activity, which efficiently processes double-stranded DNA substrates containing nicks. Also involved in response to replicative stress: recruited to stalled forks and is required to stabilize and restart stalled replication forks by restraining excessive fork regression, thereby suppressing their degradation. This is Exonuclease 3'-5' domain-containing protein 2 from Mus musculus (Mouse).